We begin with the raw amino-acid sequence, 85 residues long: UPF0386 protein Arad_1912 (85 aa).

It belongs to the UPF0386 family.

The sequence is that of UPF0386 protein Arad_1912 from Rhizobium rhizogenes (strain K84 / ATCC BAA-868) (Agrobacterium radiobacter).